Here is a 225-residue protein sequence, read N- to C-terminus: Germin-like protein 8-3 (225 aa).

Positions 1 to 23 (MASSSLFLLASLLVLASWQQAIA) are cleaved as a signal peptide. Cysteines 33 and 48 form a disulfide. N-linked (GlcNAc...) asparagine glycans are attached at residues N53 and N78. The Cupin type-1 domain occupies 60 to 213 (FNAAKFDMPR…AFQVEKKVID (154 aa)). Positions 111, 113, 118, and 158 each coordinate Mn(2+).

It belongs to the germin family. Oligomer (believed to be a pentamer but probably hexamer).

The protein localises to the secreted. It is found in the extracellular space. It localises to the apoplast. Functionally, plays a role in broad-spectrum disease resistance. Probably has no oxalate oxidase activity even if the active site is conserved. The polypeptide is Germin-like protein 8-3 (GER2) (Oryza sativa subsp. japonica (Rice)).